The sequence spans 720 residues: MACVLEPPLRMSVLSEVTASSRHYVDRLFDPDPQKVLQGVIDMKNAVIGNNKQKANLIVLGAVPRLLYLLQQETSSTELKTECAVVLGSLSMGTENNVKSLLDCNIIPALLQGLLSSDLQFIEACLRCLRTVFTSPVTPVELLYTDASVIPHLMLLLSRSIYAQEYICQIYAHCCKGPDHQTILFNHGVVQNIAHLLTSVSYKVRMQALKCFSVLAFDNPQVSMTLANVLVDGELLPQIFAKMLQRDKPIEMQLTAAKCLTYMCRAGSIRTDDNCIVLKTLPCLVRMCSKERLLEVRVEGAETLAYLIEPDVELQRIASITDHLISMLADYFKYPSSVSAITDIKRHQETGQPCIDPEEAEPRGTRDESQCTALSISHPVSQIQHDCLLTSEELDHDLKHAHELRQAAFKLYASLGANDEDIRKKIIEAEHMMDRIVNGLSETSVKVRLAAVRCLHSLSRSVQQLRTSFQDHAVWKPLMKVLQNAPDDILVVASSTLCNLLLEFSPSKEPILESGAVELLCSLTLSENPALRVNGIWALMNMAFQADQKIKSDILRGLSTEQLFQLLSDSDVNVLMKTLGLLRNLLSTRPHIDQIMSTHGKQIMQAVTFILEGEHNIEVKEQTLCILANIADGTTAKDLIMTNDDILQKIKYYVGHSNLKLQLAAMFCIANLTWNEEEGSQERQDKLREIGIVDILHKLSQSTDPNLCDKAKTALQQYFA.

ARM repeat units follow at residues 51–92 (NKQK…SLSM), 95–134 (ENNVKSLLDCNIIPALLQGLLSSDLQFIEACLRCLRTVFT), 138–176 (TPVELLYTDASVIPHLMLLLSRSIYAQEYICQIYAHCCK), 178–217 (PDHQTILFNHGVVQNIAHLLTSVSYKVRMQALKCFSVLAF), 224–265 (MTLA…YMCR), 269–309 (IRTD…YLIE), 313–352 (ELQRIASITDHLISMLADYFKYPSSVSAITDIKRHQETGQ), 421–460 (DIRKKIIEAEHMMDRIVNGLSETSVKVRLAAVRCLHSLSR), 463–502 (QQLRTSFQDHAVWKPLMKVLQNAPDDILVVASSTLCNLLL), 505–544 (SPSKEPILESGAVELLCSLTLSENPALRVNGIWALMNMAF), 548–587 (QKIKSDILRGLSTEQLFQLLSDSDVNVLMKTLGLLRNLLS), 590–632 (PHID…NIAD), 635–674 (TAKDLIMTNDDILQKIKYYVGHSNLKLQLAAMFCIANLTW), and 681–720 (QERQDKLREIGIVDILHKLSQSTDPNLCDKAKTALQQYFA).

As to quaternary structure, identified in the CTLH complex that contains at least MAEA, RMND5A (or alternatively its paralog RMND5B), GID8, WDR26, and RANBP9 and/or RANBP10; ARMC8 has an ancillary role in the complex.

Its subcellular location is the nucleus. It is found in the cytoplasm. Functionally, component of the CTLH E3 ubiquitin-protein ligase complex that mediates ubiquitination and subsequent proteasomal degradation of target proteins. This Xenopus laevis (African clawed frog) protein is Armadillo repeat-containing protein 8 (armc8).